A 212-amino-acid chain; its full sequence is Thymidylate kinase (212 aa).

Position 11–18 (11–18) interacts with ATP; that stretch reads GPEGAGKS.

This sequence belongs to the thymidylate kinase family.

The catalysed reaction is dTMP + ATP = dTDP + ADP. Functionally, phosphorylation of dTMP to form dTDP in both de novo and salvage pathways of dTTP synthesis. This Streptococcus sanguinis (strain SK36) protein is Thymidylate kinase.